The following is a 303-amino-acid chain: Cell wall mannoprotein HSP150 (303 aa).

The first 18 residues, 1 to 18 (MQYKKTLVASALAATTLA), serve as a signal peptide directing secretion. Residues 19–72 (AYAPSEPWSTLTPTATYSGGVTDYASTFGIAVQPISTTSSASSAATTASSKAKR) constitute a propeptide that is removed on maturation. PIR1/2/3 repeat units follow at residues 71 to 89 (KRAASQIGDGQVQAATTTA) and 97 to 113 (AAAVSQIGDGQIQATTK). Residues 114–134 (TTAAASLKLVMVKIQATTKTT) form a PIR1/2/3 3; degenerate repeat. PIR1/2/3 repeat units follow at residues 135 to 153 (AAAVSQIGDGQVQATTKTT), 154 to 171 (AAAVSQITDGQVQATTKT), and 172 to 190 (TQAASQVSDGQVQATSATS).

It belongs to the PIR protein family. Post-translationally, covalently linked to beta-1,3-glucan of the inner cell wall layer via an alkali-sensitive ester linkage between the gamma-carboxyl group of glutamic acids, arising from specific glutamines within the PIR1/2/3 repeats, and hydroxyl groups of glucoses of beta-1,3-glucan chains. The propeptide is cleaved off in the late Golgi. While both peptides are secreted, only a fraction of the mature glycoprotein is incorporated into the cell wall. In terms of processing, O-glycosylated. Extensively O-mannosylated.

It is found in the secreted. Its subcellular location is the cell wall. Its function is as follows. Component of the outer cell wall layer. Required for stability of the cell wall and for optimal growth. Required for resistance against several antifungal and cell wall-perturbing agents and for tolerance to heat shock. This chain is Cell wall mannoprotein HSP150 (HSP150), found in Saccharomyces cerevisiae (strain AWRI1631) (Baker's yeast).